A 34-amino-acid chain; its full sequence is Protamine (34 aa).

Residues 1–34 are disordered; that stretch reads PRRRRQASRPVRRRRRTRRSTAERRRRRVVRRRR.

In terms of tissue distribution, testis.

The protein localises to the nucleus. It localises to the chromosome. In terms of biological role, protamines substitute for histones in the chromatin of sperm during the haploid phase of spermatogenesis. They compact sperm DNA into a highly condensed, stable and inactive complex. The sequence is that of Protamine from Dicentrarchus labrax (European seabass).